Reading from the N-terminus, the 202-residue chain is Nigerythrin (202 aa).

One can recognise a Ferritin-like diiron domain in the interval 23-168 (KTAVGSTLEN…AYNDIDAPDD (146 aa)). 10 residues coordinate Fe cation: E40, E73, E115, E118, E149, H152, C174, C177, C189, and C192. A Rubredoxin-like domain is found at 169–202 (DKFHLCPICGYIHKGEDFEKCPICFRPKDTFTAY).

As to quaternary structure, homodimer. May possess two rubredoxin-like centers and two hemerythrin-like binuclear-iron centers per dimer.

The protein localises to the cytoplasm. Functionally, exhibits NADH peroxidase activity (in vitro). The chain is Nigerythrin (ngr) from Nitratidesulfovibrio vulgaris (strain ATCC 29579 / DSM 644 / CCUG 34227 / NCIMB 8303 / VKM B-1760 / Hildenborough) (Desulfovibrio vulgaris).